We begin with the raw amino-acid sequence, 379 residues long: Stimulator of interferon genes protein (379 aa).

The next 3 membrane-spanning stretches (helical) occupy residues 20–40 (VAAFVLLIVCLAALWKLGEPS), 87–107 (ACLGCPIRYGAVLLLSCYFYV), and 115–135 (LPLTWMLAHLGLSEALNILLG). Residues Cys88 and Cys91 are each lipidated (S-palmitoyl cysteine). The tract at residues 153–340 (FNVAHGLAWS…KHLRQEEREE (188 aa)) is cyclic dinucleotide-binding domain (CBD). 4 residues coordinate 2',3'-cGAMP: Ser162, Tyr167, Arg238, and Thr263. 3',3'-c-di-GMP contacts are provided by residues Ser162, Tyr167, 238-241 (RVYT), and Thr263. The 2',3'-cUAMP site is built by Tyr167, Arg238, and Thr263. Residues 340–379 (EVTMGTAGTFVAPGSSTLHQEPELLISGMDQPLPLRTDIF) form a C-terminal tail (CTT) region. Ser355 carries the phosphoserine modification. The residue at position 356 (Thr356) is a Phosphothreonine. The pLxIS motif signature appears at 363 to 366 (LLIS). The residue at position 366 (Ser366) is a Phosphoserine; by TBK1.

The protein belongs to the STING family. As to quaternary structure, homodimer; forms a homodimer in absence of cyclic nucleotide (c-di-GMP or cGAMP). Homotetramer; in presence of cyclic nucleotide (c-di-GMP or cGAMP), forms tetramers and higher-order oligomers through side-by-side packing. Interacts (when phosphorylated) with IRF3; following activation and phosphorylation on the pLxIS motif by TBK1, recruits IRF3. Interacts with TBK1; when homodimer, leading to subsequent production of IFN-beta. Interacts (via transmembrane domain) with TMEM203. Post-translationally, phosphorylation by TBK1 leads to activation and production of IFN-beta. Following cyclic nucleotide (c-di-GMP or cGAMP)-binding, activation and translocation from the endoplasmic reticulum, STING1 is phosphorylated by TBK1 at Ser-366 in the pLxIS motif. The phosphorylated pLxIS motif constitutes an IRF3-binding motif, leading to recruitment of the transcription factor IRF3 to induce type-I interferons and other cytokines. In contrast, lacks phosphorylation site at position 358, leading to reduced production of type-I interferons and other cytokines.

The protein localises to the endoplasmic reticulum membrane. It is found in the cytoplasm. Its subcellular location is the perinuclear region. The protein resides in the endoplasmic reticulum-Golgi intermediate compartment membrane. It localises to the golgi apparatus membrane. The protein localises to the cytoplasmic vesicle. It is found in the autophagosome membrane. Its subcellular location is the mitochondrion outer membrane. The protein resides in the cell membrane. It catalyses the reaction H(+)(in) = H(+)(out). In terms of biological role, facilitator of innate immune signaling that acts as a sensor of cytosolic DNA from bacteria and viruses and promotes low production of type I interferon (IFN-alpha and IFN-beta). Compared to other mammals, STING1-dependent type I interferon induction is strongly reduced in bats, suggesting that the cGAS-STING pathway promotes a limited inflammatory response. Innate immune response is triggered in response to non-CpG double-stranded DNA from viruses and bacteria delivered to the cytoplasm. Acts by binding cyclic dinucleotides: recognizes and binds cyclic di-GMP (c-di-GMP), a second messenger produced by bacteria, cyclic UMP-AMP (2',3'-cUAMP), and cyclic GMP-AMP (cGAMP), a messenger produced by CGAS in response to DNA virus in the cytosol. Upon binding to c-di-GMP, cUAMP or cGAMP, STING1 oligomerizes, translocates from the endoplasmic reticulum and is phosphorylated by TBK1 on the pLxIS motif, leading to recruitment and subsequent activation of the transcription factor IRF3 to induce expression of type I interferon and exert a potent anti-viral state. In addition to promote the production of type I interferons, plays a direct role in autophagy. Following cGAMP-binding, STING1 buds from the endoplasmic reticulum into COPII vesicles, which then form the endoplasmic reticulum-Golgi intermediate compartment (ERGIC). The ERGIC serves as the membrane source for WIPI2 recruitment and LC3 lipidation, leading to formation of autophagosomes that target cytosolic DNA or DNA viruses for degradation by the lysosome. Promotes autophagy by acting as a proton channel that directs proton efflux from the Golgi to facilitate MAP1LC3B/LC3B lipidation. The autophagy- and interferon-inducing activities can be uncoupled and autophagy induction is independent of TBK1 phosphorylation. The polypeptide is Stimulator of interferon genes protein (Eidolon helvum (Straw-colored fruit bat)).